The primary structure comprises 621 residues: 1-deoxy-D-xylulose-5-phosphate synthase (621 aa).

Thiamine diphosphate contacts are provided by residues histidine 80 and 121-123 (GHS). Aspartate 152 provides a ligand contact to Mg(2+). Thiamine diphosphate contacts are provided by residues 153-154 (GA), asparagine 181, tyrosine 288, and glutamate 370. Asparagine 181 contributes to the Mg(2+) binding site.

It belongs to the transketolase family. DXPS subfamily. In terms of assembly, homodimer. The cofactor is Mg(2+). Requires thiamine diphosphate as cofactor.

It carries out the reaction D-glyceraldehyde 3-phosphate + pyruvate + H(+) = 1-deoxy-D-xylulose 5-phosphate + CO2. It participates in metabolic intermediate biosynthesis; 1-deoxy-D-xylulose 5-phosphate biosynthesis; 1-deoxy-D-xylulose 5-phosphate from D-glyceraldehyde 3-phosphate and pyruvate: step 1/1. Functionally, catalyzes the acyloin condensation reaction between C atoms 2 and 3 of pyruvate and glyceraldehyde 3-phosphate to yield 1-deoxy-D-xylulose-5-phosphate (DXP). The polypeptide is 1-deoxy-D-xylulose-5-phosphate synthase (Erwinia tasmaniensis (strain DSM 17950 / CFBP 7177 / CIP 109463 / NCPPB 4357 / Et1/99)).